A 253-amino-acid polypeptide reads, in one-letter code: Uracil-DNA glycosylase (253 aa).

Catalysis depends on aspartate 79, which acts as the Proton acceptor.

It belongs to the uracil-DNA glycosylase (UDG) superfamily. UNG family.

The protein localises to the cytoplasm. The enzyme catalyses Hydrolyzes single-stranded DNA or mismatched double-stranded DNA and polynucleotides, releasing free uracil.. Its function is as follows. Excises uracil residues from the DNA which can arise as a result of misincorporation of dUMP residues by DNA polymerase or due to deamination of cytosine. The protein is Uracil-DNA glycosylase of Xylella fastidiosa (strain M23).